Consider the following 513-residue polypeptide: Abl interactor 2 (513 aa).

Serine 40 carries the post-translational modification Phosphoserine. Residues 45-107 enclose the t-SNARE coiled-coil homology domain; it reads RALEETKAYT…DIHKEKVARR (63 aa). The segment at 167 to 431 is disordered; that stretch reads KMGGLPRTTP…PPEDYEEEEA (265 aa). Pro residues predominate over residues 174-185; the sequence is TTPPTQKPPSPP. Serine 183 and serine 227 each carry phosphoserine. Positions 217–241 are enriched in polar residues; the sequence is PTRNMAPSQQSPVRTASVNQRNRTY. Residues 242–272 are compositionally biased toward low complexity; that stretch reads SSSGSSGGSHPSSRSSSRENSGSGSVGVPIA. Residues 273–282 are compositionally biased toward pro residues; sequence VPTPSPPSVF. Positions 283 to 325 are enriched in low complexity; it reads PAPAGSAGTPPLPATSASAPAPLVPATVPSSTAPNAAAGGAPN. Threonine 361 carries the phosphothreonine modification. Position 368 is a phosphoserine (serine 368). The segment covering 376 to 399 has biased composition (polar residues); sequence SITSQTSLQNQMNGGPFYSQNPVS. Positions 400–409 are enriched in pro residues; the sequence is DTPPPPPPVE. In terms of domain architecture, SH3 spans 451-510; that stretch reads SYLEKVVAIYDYTKDKEDELSFQEGAIIYVIKKNDDGWYEGVMNGVTGLFPGNYVESIMH.

The protein belongs to the ABI family. In terms of assembly, component of the WAVE complex composed of ABI2, CYFIP1 or CYFIP2, BRK1, NCKAP1 and WASF1/WAVE1. Within the complex, a heterodimer containing NCKAP1 and CYFIP1 interacts with a heterotrimer formed by WAVE1, ABI2 and BRK1. CYFIP2 binds to activated RAC1 which causes the complex to dissociate, releasing activated WASF1. Interacts (via SH3 domain) with ABL1 and ABL2. As to quaternary structure, (Microbial infection) Interacts with human cytomegalovirus UL135. Post-translationally, phosphorylated by ABL1. In terms of tissue distribution, widely expressed. Abundant in testes, ovary, thymus, and colon, with lower but detectable levels in prostate, peripheral blood leukocytes, and spleen.

Its subcellular location is the cytoplasm. The protein localises to the nucleus. It localises to the cell projection. The protein resides in the lamellipodium. It is found in the filopodium. Its subcellular location is the cytoskeleton. The protein localises to the cell junction. It localises to the adherens junction. In terms of biological role, regulator of actin cytoskeleton dynamics underlying cell motility and adhesion. Functions as a component of the WAVE complex, which activates actin nucleating machinery Arp2/3 to drive lamellipodia formation. Acts as a regulator and substrate of nonreceptor tyrosine kinases ABL1 and ABL2 involved in processes linked to cell growth and differentiation. Positively regulates ABL1-mediated phosphorylation of ENAH, which is required for proper polymerization of nucleated actin filaments at the leading edge. Contributes to the regulation of actin assembly at the tips of neuron projections. In particular, controls dendritic spine morphogenesis and may promote dendritic spine specification toward large mushroom-type spines known as repositories of memory in the brain. In hippocampal neurons, may mediate actin-dependent BDNF-NTRK2 early endocytic trafficking that triggers dendrite outgrowth. Participates in ocular lens morphogenesis, likely by regulating lamellipodia-driven adherens junction formation at the epithelial cell-secondary lens fiber interface. Also required for nascent adherens junction assembly in epithelial cells. The protein is Abl interactor 2 of Homo sapiens (Human).